The following is a 280-amino-acid chain: Dermonecrotic toxin LgSicTox-alphaIA1 (280 aa).

The active site involves His-12. Glu-32 and Asp-34 together coordinate Mg(2+). The active-site Nucleophile is His-48. A disulfide bond links Cys-52 and Cys-58. Asp-92 contacts Mg(2+).

Belongs to the arthropod phospholipase D family. Class I subfamily. Mg(2+) serves as cofactor. As to expression, expressed by the venom gland.

The protein resides in the secreted. The enzyme catalyses an N-(acyl)-sphingosylphosphocholine = an N-(acyl)-sphingosyl-1,3-cyclic phosphate + choline. It carries out the reaction an N-(acyl)-sphingosylphosphoethanolamine = an N-(acyl)-sphingosyl-1,3-cyclic phosphate + ethanolamine. It catalyses the reaction a 1-acyl-sn-glycero-3-phosphocholine = a 1-acyl-sn-glycero-2,3-cyclic phosphate + choline. The catalysed reaction is a 1-acyl-sn-glycero-3-phosphoethanolamine = a 1-acyl-sn-glycero-2,3-cyclic phosphate + ethanolamine. Dermonecrotic toxins cleave the phosphodiester linkage between the phosphate and headgroup of certain phospholipids (sphingolipid and lysolipid substrates), forming an alcohol (often choline) and a cyclic phosphate. This toxin acts on sphingomyelin (SM). It may also act on ceramide phosphoethanolamine (CPE), lysophosphatidylcholine (LPC) and lysophosphatidylethanolamine (LPE), but not on lysophosphatidylserine (LPS), and lysophosphatidylglycerol (LPG). It acts by transphosphatidylation, releasing exclusively cyclic phosphate products as second products. Induces dermonecrosis, hemolysis, increased vascular permeability, edema, inflammatory response, and platelet aggregation. This is Dermonecrotic toxin LgSicTox-alphaIA1 from Loxosceles gaucho (Spider).